The primary structure comprises 229 residues: Ribonuclease 3 (229 aa).

Positions 5-134 (EQKLEQDFGI…FLGALYLDQG (130 aa)) constitute an RNase III domain. Glu-47 provides a ligand contact to Mg(2+). Asp-51 is an active-site residue. Mg(2+) contacts are provided by Asp-120 and Glu-123. The active site involves Glu-123. The 70-residue stretch at 160–229 (DYKTALQERL…AKSALEQLGN (70 aa)) folds into the DRBM domain.

The protein belongs to the ribonuclease III family. As to quaternary structure, homodimer. Mg(2+) is required as a cofactor.

Its subcellular location is the cytoplasm. The catalysed reaction is Endonucleolytic cleavage to 5'-phosphomonoester.. Its function is as follows. Digests double-stranded RNA. Involved in the processing of primary rRNA transcript to yield the immediate precursors to the large and small rRNAs (23S and 16S). Also processes some mRNAs, and tRNAs when they are encoded in the rRNA operon. In terms of biological role, CRISPR (clustered regularly interspaced short palindromic repeat) is an adaptive immune system that provides protection against mobile genetic elements (viruses, transposable elements and conjugative plasmids). CRISPR clusters contain spacers, sequences complementary to antecedent mobile elements, and target invading nucleic acids. CRISPR clusters are transcribed and processed into CRISPR RNA (crRNA). In this organism endogenous ribonuclease 3 and Cas9 are required for correct coprocessing of pre-crRNA and the trans-encoded small RNA (tracrRNA). Cas9, crRNA and tracrRNA are required for cleavage of invading DNA. Complements pre-crRNA and tracRNA coprocessing defects in an rnc deletion in S.pyogenes strain 370. This is Ribonuclease 3 from Streptococcus thermophilus (strain ATCC BAA-491 / LMD-9).